Consider the following 96-residue polypeptide: Neutrophil defensin 1 (96 aa).

The first 19 residues, 1–19, serve as a signal peptide directing secretion; it reads MRTLVILAAILLVALQAQA. Residues 20–66 constitute a propeptide that is removed on maturation; that stretch reads EPLQARTDEATAAQEQIPTDNPEVVVSLAWDESLAPKDSVPGLRKNM. 3 cysteine pairs are disulfide-bonded: cysteine 68–cysteine 96, cysteine 70–cysteine 85, and cysteine 75–cysteine 95. Position 87 is a phosphotyrosine (tyrosine 87).

As to quaternary structure, tetramer. Dimer. Interacts with RETN. ADP-ribosylation drastically reduces cytotoxic and antibacterial activities, and enhances IL8 production.

It localises to the secreted. Its function is as follows. Effector molecule of the innate immune system that acts via antibiotic-like properties against a broad array of infectious agents including bacteria, fungi, and viruses or by promoting the activation and maturation of some APCs. Interacts with the essential precursor of cell wall synthesis lipid II to inhibit bacterial cell wall synthesis. Inhibits adenovirus infection via inhibition of viral disassembly at the vertex region, thereby restricting the release of internal capsid protein pVI, which is required for endosomal membrane penetration during cell entry. In addition, interaction with adenovirus capsid leads to the redirection of viral particles to TLR4 thereby promoting a NLRP3-mediated inflammasome response and interleukin 1-beta (IL-1beta) release. Induces the production of proinflammatory cytokines including type I interferon (IFN) in plasmacytoid dendritic cells (pDCs) by triggering the degradation of NFKBIA and nuclear translocation of IRF1, both of which are required for activation of pDCs. The chain is Neutrophil defensin 1 from Macaca mulatta (Rhesus macaque).